We begin with the raw amino-acid sequence, 173 residues long: Large ribosomal subunit protein uL10 (173 aa).

The protein belongs to the universal ribosomal protein uL10 family. As to quaternary structure, part of the ribosomal stalk of the 50S ribosomal subunit. The N-terminus interacts with L11 and the large rRNA to form the base of the stalk. The C-terminus forms an elongated spine to which L12 dimers bind in a sequential fashion forming a multimeric L10(L12)X complex.

In terms of biological role, forms part of the ribosomal stalk, playing a central role in the interaction of the ribosome with GTP-bound translation factors. The polypeptide is Large ribosomal subunit protein uL10 (Myxococcus xanthus (strain DK1622)).